A 134-amino-acid chain; its full sequence is Profilin-1 (134 aa).

This sequence belongs to the profilin family. In terms of assembly, occurs in many kinds of cells as a complex with monomeric actin in a 1:1 ratio.

The protein resides in the cytoplasm. Its subcellular location is the cytoskeleton. Its function is as follows. Binds to actin and affects the structure of the cytoskeleton. At high concentrations, profilin prevents the polymerization of actin, whereas it enhances it at low concentrations. By binding to PIP2, it inhibits the formation of IP3 and DG. The polypeptide is Profilin-1 (PRO1) (Nicotiana tabacum (Common tobacco)).